The primary structure comprises 115 residues: Holo-[acyl-carrier-protein] synthase (115 aa).

2 residues coordinate Mg(2+): aspartate 6 and glutamate 51.

This sequence belongs to the P-Pant transferase superfamily. AcpS family. The cofactor is Mg(2+).

It is found in the cytoplasm. The enzyme catalyses apo-[ACP] + CoA = holo-[ACP] + adenosine 3',5'-bisphosphate + H(+). Its function is as follows. Transfers the 4'-phosphopantetheine moiety from coenzyme A to a Ser of acyl-carrier-protein. The polypeptide is Holo-[acyl-carrier-protein] synthase (Campylobacter jejuni subsp. jejuni serotype O:2 (strain ATCC 700819 / NCTC 11168)).